A 504-amino-acid chain; its full sequence is Arabinose import ATP-binding protein AraG (504 aa).

ABC transporter domains lie at 8 to 243 (LSFR…MVGR) and 256 to 499 (YGEE…MPKV). 40-47 (GENGAGKS) serves as a coordination point for ATP.

The protein belongs to the ABC transporter superfamily. Arabinose importer (TC 3.A.1.2.2) family. As to quaternary structure, the complex is composed of two ATP-binding proteins (AraG), two transmembrane proteins (AraH) and a solute-binding protein (AraF).

The protein resides in the cell inner membrane. It carries out the reaction L-arabinose(out) + ATP + H2O = L-arabinose(in) + ADP + phosphate + H(+). Part of the ABC transporter complex AraFGH involved in arabinose import. Responsible for energy coupling to the transport system. The polypeptide is Arabinose import ATP-binding protein AraG (Shigella sonnei (strain Ss046)).